We begin with the raw amino-acid sequence, 79 residues long: Acyl carrier protein (79 aa).

One can recognise a Carrier domain in the interval 2-77 (SDIEERVKKI…SAIDYVNAHK (76 aa)). S37 bears the O-(pantetheine 4'-phosphoryl)serine mark.

Belongs to the acyl carrier protein (ACP) family. Post-translationally, 4'-phosphopantetheine is transferred from CoA to a specific serine of apo-ACP by AcpS. This modification is essential for activity because fatty acids are bound in thioester linkage to the sulfhydryl of the prosthetic group.

The protein localises to the cytoplasm. The protein operates within lipid metabolism; fatty acid biosynthesis. In terms of biological role, carrier of the growing fatty acid chain in fatty acid biosynthesis. The chain is Acyl carrier protein from Pseudoalteromonas atlantica (strain T6c / ATCC BAA-1087).